Consider the following 111-residue polypeptide: Antitoxin PrlF (111 aa).

The 48-residue stretch at 12–59 folds into the SpoVT-AbrB domain; sequence TTESKVTIRGQTTIPAPVREALKLKPGLDSIHYEILPGGQVFMCRLGD.

In terms of assembly, homodimer; forms a complex with YhaV with stoichiometry PrlF(2)-YhaV(4), possibly as a YhaV(2)-PrlF(2)-YhaV(2) complex like the MazFE complex.

The protein resides in the cytoplasm. Its function is as follows. Antitoxin component of a type II toxin-antitoxin (TA) system. Labile antitoxin that binds to the YhaV toxin and neutralizes its ribonuclease activity. Also acts as a transcription factor. The YhaV/PrlF complex binds the prlF-yhaV operon, probably negatively regulating its expression. In Escherichia coli O6:H1 (strain CFT073 / ATCC 700928 / UPEC), this protein is Antitoxin PrlF (prlF).